The following is a 374-amino-acid chain: Flap endonuclease 1 (374 aa).

The tract at residues 1-105 (MGVKGLNQLI…GELEKRMIRK (105 aa)) is N-domain. Asp-34 contributes to the Mg(2+) binding site. Arg-47 and Arg-71 together coordinate DNA. Mg(2+) is bound by residues Asp-87, Glu-159, Glu-161, Asp-180, and Asp-182. Residues 123–254 (EMVRYEKRSV…VTAFKLIKEH (132 aa)) are I-domain. Glu-159 provides a ligand contact to DNA. Residues Gly-232 and Asp-234 each contribute to the DNA site. Asp-234 contacts Mg(2+). The interval 341-349 (VQGRLDGFF) is interaction with PCNA. Basic and acidic residues predominate over residues 354 to 365 (TEKRKPEQDKKT). A disordered region spans residues 354–374 (TEKRKPEQDKKTKGSKKAKKK).

Belongs to the XPG/RAD2 endonuclease family. FEN1 subfamily. As to quaternary structure, interacts with PCNA. Three molecules of FEN1 bind to one PCNA trimer with each molecule binding to one PCNA monomer. PCNA stimulates the nuclease activity without altering cleavage specificity. Mg(2+) serves as cofactor. Phosphorylated. Phosphorylation upon DNA damage induces relocalization to the nuclear plasma.

It is found in the nucleus. It localises to the nucleolus. The protein localises to the nucleoplasm. The protein resides in the mitochondrion. Its function is as follows. Structure-specific nuclease with 5'-flap endonuclease and 5'-3' exonuclease activities involved in DNA replication and repair. During DNA replication, cleaves the 5'-overhanging flap structure that is generated by displacement synthesis when DNA polymerase encounters the 5'-end of a downstream Okazaki fragment. It enters the flap from the 5'-end and then tracks to cleave the flap base, leaving a nick for ligation. Also involved in the long patch base excision repair (LP-BER) pathway, by cleaving within the apurinic/apyrimidinic (AP) site-terminated flap. Acts as a genome stabilization factor that prevents flaps from equilibrating into structures that lead to duplications and deletions. Also possesses 5'-3' exonuclease activity on nicked or gapped double-stranded DNA, and exhibits RNase H activity. Also involved in replication and repair of rDNA and in repairing mitochondrial DNA. The protein is Flap endonuclease 1 of Meyerozyma guilliermondii (strain ATCC 6260 / CBS 566 / DSM 6381 / JCM 1539 / NBRC 10279 / NRRL Y-324) (Yeast).